The sequence spans 404 residues: NADH-quinone oxidoreductase subunit D 2 (404 aa).

This sequence belongs to the complex I 49 kDa subunit family. NDH-1 is composed of 14 different subunits. Subunits NuoB, C, D, E, F, and G constitute the peripheral sector of the complex.

Its subcellular location is the cell inner membrane. The catalysed reaction is a quinone + NADH + 5 H(+)(in) = a quinol + NAD(+) + 4 H(+)(out). Functionally, NDH-1 shuttles electrons from NADH, via FMN and iron-sulfur (Fe-S) centers, to quinones in the respiratory chain. The immediate electron acceptor for the enzyme in this species is believed to be ubiquinone. Couples the redox reaction to proton translocation (for every two electrons transferred, four hydrogen ions are translocated across the cytoplasmic membrane), and thus conserves the redox energy in a proton gradient. This Rhizobium meliloti (strain 1021) (Ensifer meliloti) protein is NADH-quinone oxidoreductase subunit D 2.